The following is a 690-amino-acid chain: Glycine--tRNA ligase beta subunit (690 aa).

This sequence belongs to the class-II aminoacyl-tRNA synthetase family. Tetramer of two alpha and two beta subunits.

It localises to the cytoplasm. The enzyme catalyses tRNA(Gly) + glycine + ATP = glycyl-tRNA(Gly) + AMP + diphosphate. The polypeptide is Glycine--tRNA ligase beta subunit (Desulfitobacterium hafniense (strain DSM 10664 / DCB-2)).